Consider the following 583-residue polypeptide: MSSPDRSIDIDLEKYPSTATKSVYGQSKDDKNVFDIHPTESEVIPGEVEYADTPSHQNFLQKFFSDFKPVKADREDGVALKRHLKGRHMQMIAIGGAIGTGLFVGSGSSLADGGPASVIIDYTLIGIMMFFTVYALGELAVSYPVAGGFYNYAVRFIDPAWGFAVGWNYFMNYFVTFPLELTTCAITFRYWTDINSCAWITIFLVFVICINLFGVRGYGEVEFILSTLKVVATTGFIILAIIINCGGVPTDPRGYIGGKIIKNKPFRHSFKGFCSVFTTAGFSFSGTEVVGLAAAEAEDPQKSLPRATKQVFWRIAIFYVVSLILIGLLVSPDDPRLMGNSSDGSTSPFVLAIKEANIRGLPSVFNAVIIISTVSVANSCTFTASRTLHAMAAKGDAPRFFAYTDRLGRPLLAMAVCLLFGFFAYINAAGDVSDTVFDWLLAISGISNFFSWGSINLCHIVFRLAMKKQGRSLDQLGFVSPMGIWGSAIGLAFNILCLMAEFYVSLFPIGSKPNANDFFQGYLAAPIVIAFFIGYKIYDRSHIPSLSKLDLDTGLRTYPPKDKESEKIRDAKGFFKWIWQSLC.

A Phosphoserine modification is found at Ser22. Transmembrane regions (helical) follow at residues 91-111 (MIAI…SSLA), 116-136 (ASVI…VYAL), 159-179 (PAWG…TFPL), 194-214 (INSC…NLFG), 223-243 (FILS…AIII), and 311-331 (VFWR…LLVS). The N-linked (GlcNAc...) asparagine glycan is linked to Asn340. 5 helical membrane-spanning segments follow: residues 364–384 (VFNA…TFTA), 410–430 (PLLA…NAAG), 435–455 (TVFD…WGSI), 476–496 (LGFV…FNIL), and 518–538 (FFQG…YKIY).

The protein belongs to the amino acid-polyamine-organocation (APC) superfamily.

It is found in the golgi apparatus membrane. The protein resides in the membrane. This is an uncharacterized protein from Schizosaccharomyces pombe (strain 972 / ATCC 24843) (Fission yeast).